The following is a 456-amino-acid chain: Bifunctional protein GlmU (456 aa).

The segment at 1 to 229 is pyrophosphorylase; it reads MLNNAMSVVI…LSEVEGVNNR (229 aa). UDP-N-acetyl-alpha-D-glucosamine is bound by residues 11-14, Lys25, Gln76, 81-82, 103-105, Gly140, Glu154, Asn169, and Asn227; these read LAAG, GT, and YGD. Asp105 is a binding site for Mg(2+). Asn227 is a Mg(2+) binding site. Residues 230 to 250 form a linker region; that stretch reads LQLSRLERVYQSEQAEKLLLA. Positions 251-456 are N-acetyltransferase; it reads GVMLRDPARF…EGWRRPVKKK (206 aa). Positions 333 and 351 each coordinate UDP-N-acetyl-alpha-D-glucosamine. Catalysis depends on His363, which acts as the Proton acceptor. UDP-N-acetyl-alpha-D-glucosamine contacts are provided by Tyr366 and Asn377. Acetyl-CoA contacts are provided by residues Ala380, 386 to 387, Ser405, Ala423, and Arg440; that span reads NY.

In the N-terminal section; belongs to the N-acetylglucosamine-1-phosphate uridyltransferase family. The protein in the C-terminal section; belongs to the transferase hexapeptide repeat family. In terms of assembly, homotrimer. It depends on Mg(2+) as a cofactor.

Its subcellular location is the cytoplasm. The catalysed reaction is alpha-D-glucosamine 1-phosphate + acetyl-CoA = N-acetyl-alpha-D-glucosamine 1-phosphate + CoA + H(+). It catalyses the reaction N-acetyl-alpha-D-glucosamine 1-phosphate + UTP + H(+) = UDP-N-acetyl-alpha-D-glucosamine + diphosphate. It participates in nucleotide-sugar biosynthesis; UDP-N-acetyl-alpha-D-glucosamine biosynthesis; N-acetyl-alpha-D-glucosamine 1-phosphate from alpha-D-glucosamine 6-phosphate (route II): step 2/2. The protein operates within nucleotide-sugar biosynthesis; UDP-N-acetyl-alpha-D-glucosamine biosynthesis; UDP-N-acetyl-alpha-D-glucosamine from N-acetyl-alpha-D-glucosamine 1-phosphate: step 1/1. Its pathway is bacterial outer membrane biogenesis; LPS lipid A biosynthesis. In terms of biological role, catalyzes the last two sequential reactions in the de novo biosynthetic pathway for UDP-N-acetylglucosamine (UDP-GlcNAc). The C-terminal domain catalyzes the transfer of acetyl group from acetyl coenzyme A to glucosamine-1-phosphate (GlcN-1-P) to produce N-acetylglucosamine-1-phosphate (GlcNAc-1-P), which is converted into UDP-GlcNAc by the transfer of uridine 5-monophosphate (from uridine 5-triphosphate), a reaction catalyzed by the N-terminal domain. The sequence is that of Bifunctional protein GlmU from Shigella boydii serotype 18 (strain CDC 3083-94 / BS512).